A 627-amino-acid polypeptide reads, in one-letter code: Hemocyanin B chain (627 aa).

Cu cation contacts are provided by His-173, His-177, and His-204. 2 N-linked (GlcNAc...) asparagine glycosylation sites follow: Asn-312 and Asn-316. Residues His-324, His-328, and His-364 each coordinate Cu cation. An intrachain disulfide couples Cys-534 to Cys-582.

This sequence belongs to the tyrosinase family. Hemocyanin subfamily. As to quaternary structure, tarantula hemocyanin is a 24-chain polymer with seven different chains identified. As to expression, hemolymph.

It localises to the secreted. It is found in the extracellular space. Its function is as follows. Hemocyanins are copper-containing oxygen carriers occurring freely dissolved in the hemolymph of many mollusks and arthropods. The chain is Hemocyanin B chain (HCB) from Aphonopelma sp. (American tarantula).